The chain runs to 755 residues: Dynamin-1-like protein (755 aa).

Methionine 1 is subject to N-acetylmethionine. Residues 22-315 (IIQLPQIVVV…LMHHIRDCLP (294 aa)) form the Dynamin-type G domain. A G1 motif region spans residues 32–39 (GTQSSGKS). Position 32 to 40 (32 to 40 (GTQSSGKSS)) interacts with GTP. The tract at residues 58 to 60 (VTR) is G2 motif. The G3 motif stretch occupies residues 159–162 (DLPG). The interval 228–231 (TKLD) is G4 motif. GTP is bound by residues 228–234 (TKLDLMD) and 259–262 (NRSQ). The tract at residues 258-261 (VNRS) is G5 motif. The segment at 357–502 (YCNTIEGTAK…NEMVHNLVAI (146 aa)) is middle domain. Residues 461–704 (NYSTQELLRF…NHVKDTLQSE (244 aa)) are interaction with GSK3B. Residues 515 to 582 (ADACGLMNNN…IQDNRRETKN (68 aa)) are b domain. The disordered stretch occupies residues 536–610 (ELPSAVSRDK…QEPTTGNWRG (75 aa)). A Phosphoserine modification is found at serine 542. Residues lysine 545 and lysine 548 each participate in a glycyl lysine isopeptide (Lys-Gly) (interchain with G-Cter in SUMO) cross-link. Residues 550–567 (PSALAPASQEPSPAASAE) are compositionally biased toward low complexity. Serine 561 bears the Phosphoserine mark. Basic and acidic residues predominate over residues 568–581 (ADGKLIQDNRRETK). Glycyl lysine isopeptide (Lys-Gly) (interchain with G-Cter in SUMO) cross-links involve residues lysine 571 and lysine 581. Gly residues predominate over residues 586 to 600 (AGGGIGDGGRIGDGG). Residues threonine 604 and threonine 605 are each glycosylated (O-linked (GlcNAc) threonine). Residue lysine 613 forms a Glycyl lysine isopeptide (Lys-Gly) (interchain with G-Cter in SUMO) linkage. N6-acetyllysine; alternate is present on lysine 616. Residue lysine 616 forms a Glycyl lysine isopeptide (Lys-Gly) (interchain with G-Cter in SUMO); alternate linkage. Lysine 625 is covalently cross-linked (Glycyl lysine isopeptide (Lys-Gly) (interchain with G-Cter in SUMO)). Serine 626 carries the phosphoserine modification. Residue lysine 627 forms a Glycyl lysine isopeptide (Lys-Gly) (interchain with G-Cter in SUMO) linkage. Serine 635 is modified (phosphoserine; by CDK1). The residue at position 656 (serine 656) is a Phosphoserine; by CAMK1 and PKA. Cysteine 663 carries the S-nitrosocysteine modification. The 92-residue stretch at 663–754 (CEVIERLIKS…IIAEIRETHL (92 aa)) folds into the GED domain. Residues 673-687 (YFLIVRKNIQDSVPK) form an important for homodimerization region.

This sequence belongs to the TRAFAC class dynamin-like GTPase superfamily. Dynamin/Fzo/YdjA family. In terms of assembly, homotetramer; dimerizes through the N-terminal GTP-middle region of one molecule binding to the GED domain of another DNM1L molecule. Oligomerizes in a GTP-dependent manner to form membrane-associated tubules with a spiral pattern. Interacts with GSK3B and MARCHF5. Interacts (via the GTPase and B domains) with UBE2I; the interaction promotes sumoylation of DNM1L, mainly in its B domain. Interacts with PPP3CA; the interaction dephosphorylates DNM1L and regulates its transition to mitochondria. Interacts with BCL2L1 isoform BCL-X(L) and CLTA; DNM1L and BCL2L1 isoform BCL-X(L) may form a complex in synaptic vesicles that also contains clathrin and MFF. Interacts with MFF; the interaction is inhinited by C11orf65/MFI. Interacts with FIS1. Interacts with MIEF2 and MIEF1; GTP-dependent this regulates GTP hydrolysis and DNM1L oligomerization. Interacts with PGAM5; this interaction leads to dephosphorylation at Ser-656 and activation of GTPase activity and eventually to mitochondria fragmentation. Interacts with RALBP1; during mitosis, recruits DNM1L to the mitochondrion and mediates its activation by the mitotic kinase cyclin B-CDK1. Interacts with FUNDC1; this interaction recruits DNM1L/DRP1 at ER-mitochondria contact sites. In terms of processing, phosphorylation/dephosphorylation events on two sites near the GED domain regulate mitochondrial fission. Phosphorylation on Ser-656 by CAMK1 and PKA inhibits the GTPase activity, leading to a defect in mitochondrial fission promoting mitochondrial elongation. Dephosphorylated on this site by PPP3CA which promotes mitochondrial fission. Phosphorylation on Ser-635 by PINK1 activates the GTPase activity and promotes mitochondrial fission. Phosphorylation on Ser-635 by CDK1 also promotes mitochondrial fission. Phosphorylated in a circadian manner at Ser-656. Dephosphorylated by PGAM5. Sumoylated on various lysine residues within the B domain, probably by MUL1. Sumoylation positively regulates mitochondrial fission. Desumoylated by SENP5 during G2/M transition of mitosis. Appears to be linked to its catalytic activity. Post-translationally, S-nitrosylation increases DNM1L dimerization, mitochondrial fission and causes neuronal damage. In terms of processing, O-GlcNAcylation augments the level of the GTP-bound active form of DNM1L and induces translocation from the cytoplasm to mitochondria in cardiomyocytes. It also decreases phosphorylation at Ser-656. Ubiquitination by MARCHF5 affects mitochondrial morphology. In terms of tissue distribution, expressed in all tissues tested (at protein level). Longer isoforms are preferentially expressed in brain.

Its subcellular location is the cytoplasm. It localises to the cytosol. The protein localises to the golgi apparatus. The protein resides in the endomembrane system. It is found in the mitochondrion outer membrane. Its subcellular location is the peroxisome. It localises to the membrane. The protein localises to the clathrin-coated pit. The protein resides in the cytoplasmic vesicle. It is found in the secretory vesicle. Its subcellular location is the synaptic vesicle membrane. It catalyses the reaction GTP + H2O = GDP + phosphate + H(+). Functions in mitochondrial and peroxisomal division. Mediates membrane fission through oligomerization into membrane-associated tubular structures that wrap around the scission site to constrict and sever the mitochondrial membrane through a GTP hydrolysis-dependent mechanism. The specific recruitment at scission sites is mediated by membrane receptors like MFF, MIEF1 and MIEF2 for mitochondrial membranes. While the recruitment by the membrane receptors is GTP-dependent, the following hydrolysis of GTP induces the dissociation from the receptors and allows DNM1L filaments to curl into closed rings that are probably sufficient to sever a double membrane. Acts downstream of PINK1 to promote mitochondrial fission in a PRKN-dependent manner. Plays an important role in mitochondrial fission during mitosis. Through its function in mitochondrial division, ensures the survival of at least some types of postmitotic neurons, including Purkinje cells, by suppressing oxidative damage. Required for normal brain development, including that of cerebellum. Facilitates developmentally regulated apoptosis during neural tube formation. Required for a normal rate of cytochrome c release and caspase activation during apoptosis; this requirement may depend upon the cell type and the physiological apoptotic cues. Required for formation of endocytic vesicles. Proposed to regulate synaptic vesicle membrane dynamics through association with BCL2L1 isoform Bcl-X(L) which stimulates its GTPase activity in synaptic vesicles; the function may require its recruitment by MFF to clathrin-containing vesicles. Required for programmed necrosis execution. Rhythmic control of its activity following phosphorylation at Ser-656 is essential for the circadian control of mitochondrial ATP production. The chain is Dynamin-1-like protein from Rattus norvegicus (Rat).